The primary structure comprises 90 residues: WAP four-disulfide core domain protein 12 (90 aa).

The N-terminal stretch at 1–23 (MGSSSFLVLMVSLALVTLVAVEG) is a signal peptide. The region spanning 27 to 74 (GIEKAGVCPADNVRCFKSDPPQCHTDQDCLGERKCCYLHCGFKCVIPV) is the WAP domain. 4 disulfide bridges follow: Cys34-Cys62, Cys41-Cys66, Cys49-Cys61, and Cys55-Cys70.

The protein resides in the secreted. Its function is as follows. Antibacterial protein. Putative acid-stable proteinase inhibitor. This is WAP four-disulfide core domain protein 12 (WFDC12) from Pongo abelii (Sumatran orangutan).